Reading from the N-terminus, the 214-residue chain is Chalcone isomerase-like protein 1 (214 aa).

The protein belongs to the chalcone isomerase family. As to expression, mostly expressed in glandular trichomes (lupulin glands), and, to a lower extent, in cones, cones bracts, leaves, stems and roots.

The protein localises to the cytoplasm. It carries out the reaction a chalcone = a flavanone.. It participates in secondary metabolite biosynthesis; flavonoid biosynthesis. Its function is as follows. Involved in the biosynthesis of prenylated phenolics natural products which contribute to the bitter taste of beer and display broad biological activities. Involved in anthocyanin biosynthesis. Polyketide binding proteins (PBP) which reduces the catalytic activities of CHS_H1 and PT1L and prevents demethylxanthohumol (DMX) production, by binding to DMX and naringenin chalcone (NC) to stabilize the chalconoids ring-opened structure. The polypeptide is Chalcone isomerase-like protein 1 (Humulus lupulus (European hop)).